The primary structure comprises 384 residues: Probable peptidoglycan glycosyltransferase FtsW (384 aa).

The Cytoplasmic portion of the chain corresponds to 1 to 19; that stretch reads MAAVWRWFVPERPSFYDRG. A helical transmembrane segment spans residues 20–40; that stretch reads LLALTFSLMGIGLMMVASASI. Residues 41 to 54 lie on the Periplasmic side of the membrane; the sequence is KEGPGGDMFYFTKR. A helical membrane pass occupies residues 55–75; sequence HLIFLFVCLGIGVGTLYLPLE. The Cytoplasmic segment spans residues 76–83; that stretch reads RWREWSGR. The helical transmembrane segment at 84–104 threads the bilayer; the sequence is LLVGALGLLFAVLAVGRTVNG. Over 105 to 110 the chain is Periplasmic; sequence AKRWIG. Residues 111–131 traverse the membrane as a helical segment; it reads FGFFNIQPAELAKLALIVFIA. The Cytoplasmic segment spans residues 132–143; sequence SYLVRRSDEVRG. The helical transmembrane segment at 144 to 164 threads the bilayer; it reads NIAGFVKPLAVVFLLAIMLLA. The Periplasmic segment spans residues 165–166; that stretch reads QP. The chain crosses the membrane as a helical span at residues 167 to 187; that stretch reads DLGSVVVLFVCTFGLLFIGGA. A topological domain (cytoplasmic) is located at residue lysine 188. Residues 189 to 209 form a helical membrane-spanning segment; sequence LVQFIAIIVAGLSALAGLIIY. Over 210–267 the chain is Periplasmic; sequence EPYRLRRVTSFLDPWADPFGSGYQLTQSLMAFGRGGFFGQGLGNSVQKLSYLPEAHTD. A helical membrane pass occupies residues 268 to 288; sequence FVFAILGEELGYFGVLVVLFL. Residues 289 to 316 lie on the Cytoplasmic side of the membrane; sequence QLLLAMKALQIGRTALLRSKFFEGYMAC. A helical membrane pass occupies residues 317–337; sequence GIGIWFSFQTVVNVGAAAGML. Residues 338 to 343 lie on the Periplasmic side of the membrane; it reads PTKGLT. A helical membrane pass occupies residues 344–364; that stretch reads LPLVSYGGSSLIAITMAVAIL. Over 365–384 the chain is Cytoplasmic; the sequence is LRIDFERRLDTSHVIQREAA.

This sequence belongs to the SEDS family. FtsW subfamily.

The protein localises to the cell inner membrane. It catalyses the reaction [GlcNAc-(1-&gt;4)-Mur2Ac(oyl-L-Ala-gamma-D-Glu-L-Lys-D-Ala-D-Ala)](n)-di-trans,octa-cis-undecaprenyl diphosphate + beta-D-GlcNAc-(1-&gt;4)-Mur2Ac(oyl-L-Ala-gamma-D-Glu-L-Lys-D-Ala-D-Ala)-di-trans,octa-cis-undecaprenyl diphosphate = [GlcNAc-(1-&gt;4)-Mur2Ac(oyl-L-Ala-gamma-D-Glu-L-Lys-D-Ala-D-Ala)](n+1)-di-trans,octa-cis-undecaprenyl diphosphate + di-trans,octa-cis-undecaprenyl diphosphate + H(+). It functions in the pathway cell wall biogenesis; peptidoglycan biosynthesis. Its function is as follows. Peptidoglycan polymerase that is essential for cell division. The sequence is that of Probable peptidoglycan glycosyltransferase FtsW from Tolumonas auensis (strain DSM 9187 / NBRC 110442 / TA 4).